The following is a 396-amino-acid chain: Elongation factor Tu (396 aa).

The region spanning 10-206 is the tr-type G domain; it reads KPHCNIGTIG…NVDEYIPQPE (197 aa). A G1 region spans residues 19–26; it reads GHVDHGKT. Residue 19-26 coordinates GTP; sequence GHVDHGKT. Residue T26 participates in Mg(2+) binding. Positions 60–64 are G2; it reads GITIS. Residues 81–84 are G3; sequence DCPG. GTP is bound by residues 81 to 85 and 136 to 139; these read DCPGH and NKCD. The tract at residues 136-139 is G4; sequence NKCD. The tract at residues 174-176 is G5; the sequence is SAL.

Belongs to the TRAFAC class translation factor GTPase superfamily. Classic translation factor GTPase family. EF-Tu/EF-1A subfamily. As to quaternary structure, monomer.

The protein localises to the cytoplasm. It carries out the reaction GTP + H2O = GDP + phosphate + H(+). GTP hydrolase that promotes the GTP-dependent binding of aminoacyl-tRNA to the A-site of ribosomes during protein biosynthesis. The polypeptide is Elongation factor Tu (Bradyrhizobium diazoefficiens (strain JCM 10833 / BCRC 13528 / IAM 13628 / NBRC 14792 / USDA 110)).